The following is a 199-amino-acid chain: Probable GTP-binding protein EngB (199 aa).

Positions 28–199 (DLPEIALAGR…DSWDAILEQV (172 aa)) constitute an EngB-type G domain. GTP-binding positions include 36–43 (GRSNVGKS), 63–67 (GKTQL), 81–84 (DVPG), 148–151 (TKAD), and 180–182 (FSS). Ser43 and Thr65 together coordinate Mg(2+).

The protein belongs to the TRAFAC class TrmE-Era-EngA-EngB-Septin-like GTPase superfamily. EngB GTPase family. Requires Mg(2+) as cofactor.

Its function is as follows. Necessary for normal cell division and for the maintenance of normal septation. The chain is Probable GTP-binding protein EngB from Streptococcus pyogenes serotype M1.